The chain runs to 568 residues: Glucose-6-phosphate isomerase, cytosolic 1 (568 aa).

The active-site Proton donor is Glu-360. Residues His-391 and Lys-516 contribute to the active site.

The protein belongs to the GPI family. Homodimer.

Its subcellular location is the cytoplasm. It carries out the reaction alpha-D-glucose 6-phosphate = beta-D-fructose 6-phosphate. It participates in carbohydrate degradation; glycolysis; D-glyceraldehyde 3-phosphate and glycerone phosphate from D-glucose: step 2/4. The sequence is that of Glucose-6-phosphate isomerase, cytosolic 1 (PGIC1) from Clarkia williamsonii.